A 77-amino-acid chain; its full sequence is Small ribosomal subunit protein uS17 (77 aa).

Belongs to the universal ribosomal protein uS17 family. Part of the 30S ribosomal subunit.

Its function is as follows. One of the primary rRNA binding proteins, it binds specifically to the 5'-end of 16S ribosomal RNA. The sequence is that of Small ribosomal subunit protein uS17 from Rickettsia bellii (strain OSU 85-389).